The following is a 498-amino-acid chain: WD repeat-containing protein 55 homolog (498 aa).

The disordered stretch occupies residues 1-133 (MHTHNNFKTP…TFDLDEDDET (133 aa)). 3 stretches are compositionally biased toward acidic residues: residues 12-23 (DEDELDDLDEDM), 31-48 (IEQE…EYDL), and 83-95 (SDSD…DAGD). The span at 114 to 123 (PSGSNRQSEA) shows a compositional bias: polar residues. WD repeat units follow at residues 155-194 (KLED…NKLL), 199-238 (VHSK…LKKL), 242-280 (AHDD…AIFE), 283-322 (ELED…MYVQ), 325-364 (PYEE…YHCD), and 409-448 (QHNM…DFGD).

This sequence belongs to the WD repeat WDR55 family.

This chain is WD repeat-containing protein 55 homolog, found in Drosophila erecta (Fruit fly).